We begin with the raw amino-acid sequence, 499 residues long: C2H2-type transcription factor RPN4 (499 aa).

A disordered region spans residues 329–397 (QTTKKDNSKP…TTKSTHTHSK (69 aa)). A compositionally biased stretch (basic and acidic residues) spans 331-344 (TKKDNSKPVEKTVV). The span at 345–363 (EKTSSVTKAGSNHSRSTLA) shows a compositional bias: polar residues. The C2H2-type zinc-finger motif lies at 405–436 (FVCELVNSVTNEVCGAQFSRTYDLTRHQNTIH).

Its subcellular location is the nucleus. Transcription factor that acts as a transcriptional activator of a number of genes encoding proteasomal subunits. Plays a role in ergosterol and plasma membrane homeostasis, and subsequent azole resistance. Regulates the expression of 212 genes, activating 80 genes and repressing, likely in an indirect fashion, 132 genes. Targets comprise several proteasome and ergosterol biosynthesis genes, including ERG1, ERG2, ERG3, and ERG11. Directly regulates ERG11 expression through the 3'-TTGCAAA-5' binding motif. In Candida glabrata (strain ATCC 2001 / BCRC 20586 / JCM 3761 / NBRC 0622 / NRRL Y-65 / CBS 138) (Yeast), this protein is C2H2-type transcription factor RPN4.